The chain runs to 212 residues: 3-demethoxyubiquinol 3-hydroxylase (212 aa).

Fe cation is bound by residues glutamate 61, glutamate 91, histidine 94, glutamate 143, glutamate 175, and histidine 178.

It belongs to the COQ7 family. Fe cation is required as a cofactor.

The protein localises to the cell membrane. The catalysed reaction is a 5-methoxy-2-methyl-3-(all-trans-polyprenyl)benzene-1,4-diol + AH2 + O2 = a 3-demethylubiquinol + A + H2O. It functions in the pathway cofactor biosynthesis; ubiquinone biosynthesis. In terms of biological role, catalyzes the hydroxylation of 2-nonaprenyl-3-methyl-6-methoxy-1,4-benzoquinol during ubiquinone biosynthesis. The sequence is that of 3-demethoxyubiquinol 3-hydroxylase from Paraburkholderia phytofirmans (strain DSM 17436 / LMG 22146 / PsJN) (Burkholderia phytofirmans).